We begin with the raw amino-acid sequence, 181 residues long: ATP synthase subunit delta (181 aa).

It belongs to the ATPase delta chain family. F-type ATPases have 2 components, F(1) - the catalytic core - and F(0) - the membrane proton channel. F(1) has five subunits: alpha(3), beta(3), gamma(1), delta(1), epsilon(1). F(0) has three main subunits: a(1), b(2) and c(10-14). The alpha and beta chains form an alternating ring which encloses part of the gamma chain. F(1) is attached to F(0) by a central stalk formed by the gamma and epsilon chains, while a peripheral stalk is formed by the delta and b chains.

Its subcellular location is the cell membrane. Functionally, f(1)F(0) ATP synthase produces ATP from ADP in the presence of a proton or sodium gradient. F-type ATPases consist of two structural domains, F(1) containing the extramembraneous catalytic core and F(0) containing the membrane proton channel, linked together by a central stalk and a peripheral stalk. During catalysis, ATP synthesis in the catalytic domain of F(1) is coupled via a rotary mechanism of the central stalk subunits to proton translocation. In terms of biological role, this protein is part of the stalk that links CF(0) to CF(1). It either transmits conformational changes from CF(0) to CF(1) or is implicated in proton conduction. This is ATP synthase subunit delta from Lactiplantibacillus plantarum (strain ATCC BAA-793 / NCIMB 8826 / WCFS1) (Lactobacillus plantarum).